A 227-amino-acid polypeptide reads, in one-letter code: ATP synthase F(0) complex subunit a (227 aa).

The next 6 membrane-spanning stretches (helical) occupy residues Phe-14–Pro-34, Trp-69–Leu-89, Leu-99–Phe-119, Val-139–Val-159, Leu-165–Met-185, and Ala-190–Ile-210.

Belongs to the ATPase A chain family. As to quaternary structure, component of the ATP synthase complex composed at least of ATP5F1A/subunit alpha, ATP5F1B/subunit beta, ATP5MC1/subunit c (homooctomer), MT-ATP6/subunit a, MT-ATP8/subunit 8, ATP5ME/subunit e, ATP5MF/subunit f, ATP5MG/subunit g, ATP5MK/subunit k, ATP5MJ/subunit j, ATP5F1C/subunit gamma, ATP5F1D/subunit delta, ATP5F1E/subunit epsilon, ATP5PF/subunit F6, ATP5PB/subunit b, ATP5PD/subunit d, ATP5PO/subunit OSCP. ATP synthase complex consists of a soluble F(1) head domain (subunits alpha(3) and beta(3)) - the catalytic core - and a membrane F(0) domain - the membrane proton channel (subunits c, a, 8, e, f, g, k and j). These two domains are linked by a central stalk (subunits gamma, delta, and epsilon) rotating inside the F1 region and a stationary peripheral stalk (subunits F6, b, d, and OSCP). Interacts with DNAJC30; interaction is direct.

It localises to the mitochondrion inner membrane. It carries out the reaction H(+)(in) = H(+)(out). Functionally, subunit a, of the mitochondrial membrane ATP synthase complex (F(1)F(0) ATP synthase or Complex V) that produces ATP from ADP in the presence of a proton gradient across the membrane which is generated by electron transport complexes of the respiratory chain. ATP synthase complex consist of a soluble F(1) head domain - the catalytic core - and a membrane F(1) domain - the membrane proton channel. These two domains are linked by a central stalk rotating inside the F(1) region and a stationary peripheral stalk. During catalysis, ATP synthesis in the catalytic domain of F(1) is coupled via a rotary mechanism of the central stalk subunits to proton translocation. With the subunit c (ATP5MC1), forms the proton-conducting channel in the F(0) domain, that contains two crucial half-channels (inlet and outlet) that facilitate proton movement from the mitochondrial intermembrane space (IMS) into the matrix. Protons are taken up via the inlet half-channel and released through the outlet half-channel, following a Grotthuss mechanism. The protein is ATP synthase F(0) complex subunit a of Scyliorhinus canicula (Small-spotted catshark).